We begin with the raw amino-acid sequence, 558 residues long: Small ribosomal subunit protein bS1 (558 aa).

6 consecutive S1 motif domains span residues 21-87, 105-171, 192-260, 277-347, 364-434, and 451-520; these read GSII…LSRE, SETV…VSRR, GMHV…LGLK, ETKL…LGLK, GVHV…LGIK, and GAII…LTIH.

It belongs to the bacterial ribosomal protein bS1 family.

Functionally, binds mRNA; thus facilitating recognition of the initiation point. It is needed to translate mRNA with a short Shine-Dalgarno (SD) purine-rich sequence. The protein is Small ribosomal subunit protein bS1 (rpsA) of Buchnera aphidicola subsp. Acyrthosiphon pisum (strain APS) (Acyrthosiphon pisum symbiotic bacterium).